The sequence spans 519 residues: Alternative NAD(P)H-ubiquinone oxidoreductase C1, chloroplastic/mitochondrial (519 aa).

The transit peptide at 1–52 (MAVLSSVSSLIPFSYGATRLTSKASLASRTSGFNLSSRWNSTRNSPMLYLSR) directs the protein to the chloroplast and mitochondrion. Residue 82–118 (RVCILGGGFGGLYTALRLESLVWPEDKKPQVVLVDQS) participates in FAD binding. 246–282 (IKVAVVGCGYAGVELAATISERLQDRGIVQSINVSKN) lines the NAD(+) pocket.

This sequence belongs to the NADH dehydrogenase family. FAD serves as cofactor. Flowers, roots, leaves and stems.

It is found in the mitochondrion. It localises to the mitochondrion inner membrane. Its subcellular location is the plastid. The protein resides in the chloroplast. The protein localises to the plastoglobule. The enzyme catalyses a quinone + NADH + H(+) = a quinol + NAD(+). It catalyses the reaction a ubiquinone + NADH + H(+) = a ubiquinol + NAD(+). The catalysed reaction is demethylphylloquinone + NADPH + H(+) = demethylphylloquinol + NADP(+). With respect to regulation, inhibited by dicumarol. In terms of biological role, bifunctional oxidoreductase ables to act both on prenyl naphthoquinones and on prenyl benzoquinones. May serve a respiratory function. Involved in an electron flow toward the plastoglobule plastoquinone pool. Required for plastochromanol-8 accumulation and for phylloquinone (vitamin K1) production. Probably not directly involved in cyclic or chlororespiratory electron flows under standard growth conditions, but participates in the redox metabolism of plastoquinone-9 and the tocophrol recycling-intermediate alpha-tocopherol quinone. Catalyzes the penultimate step in the biosynthesis of vitamin K1. This chain is Alternative NAD(P)H-ubiquinone oxidoreductase C1, chloroplastic/mitochondrial, found in Arabidopsis thaliana (Mouse-ear cress).